The chain runs to 264 residues: Zinc import ATP-binding protein ZnuC (264 aa).

An ABC transporter domain is found at 11-226 (IELQNIKVVF…PTFIHLFGDQ (216 aa)). Residue 43–50 (GPNGGGKS) coordinates ATP.

This sequence belongs to the ABC transporter superfamily. Zinc importer (TC 3.A.1.15.5) family. The complex is composed of two ATP-binding proteins (ZnuC), two transmembrane proteins (ZnuB) and a solute-binding protein (ZnuA).

The protein localises to the cell inner membrane. It catalyses the reaction Zn(2+)(out) + ATP(in) + H2O(in) = Zn(2+)(in) + ADP(in) + phosphate(in) + H(+)(in). Functionally, part of the ABC transporter complex ZnuABC involved in zinc import. Responsible for energy coupling to the transport system. The sequence is that of Zinc import ATP-binding protein ZnuC from Mannheimia succiniciproducens (strain KCTC 0769BP / MBEL55E).